The sequence spans 333 residues: Large ribosomal subunit protein uL3 (333 aa).

It belongs to the universal ribosomal protein uL3 family. Part of the 50S ribosomal subunit. Forms a cluster with proteins L14 and L24e.

In terms of biological role, one of the primary rRNA binding proteins, it binds directly near the 3'-end of the 23S rRNA, where it nucleates assembly of the 50S subunit. The chain is Large ribosomal subunit protein uL3 from Methanocorpusculum labreanum (strain ATCC 43576 / DSM 4855 / Z).